Here is a 455-residue protein sequence, read N- to C-terminus: Membrane-bound lytic murein transglycosylase F (455 aa).

The N-terminal stretch at 1 to 21 (MPKSAVSLFAILLLAASVITA) is a signal peptide. A non-LT domain region spans residues 22–264 (CSPQTRPDAM…HIKEQHFGHV (243 aa)). The LT domain stretch occupies residues 265–455 (KQFNYVTTSL…LKYLDEQGRL (191 aa)). Glu309 is a catalytic residue.

In the N-terminal section; belongs to the bacterial solute-binding protein 3 family. This sequence in the C-terminal section; belongs to the transglycosylase Slt family.

The protein resides in the cell outer membrane. The catalysed reaction is Exolytic cleavage of the (1-&gt;4)-beta-glycosidic linkage between N-acetylmuramic acid (MurNAc) and N-acetylglucosamine (GlcNAc) residues in peptidoglycan, from either the reducing or the non-reducing ends of the peptidoglycan chains, with concomitant formation of a 1,6-anhydrobond in the MurNAc residue.. Functionally, murein-degrading enzyme that degrades murein glycan strands and insoluble, high-molecular weight murein sacculi, with the concomitant formation of a 1,6-anhydromuramoyl product. Lytic transglycosylases (LTs) play an integral role in the metabolism of the peptidoglycan (PG) sacculus. Their lytic action creates space within the PG sacculus to allow for its expansion as well as for the insertion of various structures such as secretion systems and flagella. The chain is Membrane-bound lytic murein transglycosylase F from Idiomarina loihiensis (strain ATCC BAA-735 / DSM 15497 / L2-TR).